A 188-amino-acid chain; its full sequence is Pyridoxal 5'-phosphate synthase subunit PdxT (188 aa).

Residue 47-49 coordinates L-glutamine; that stretch reads GES. Catalysis depends on Cys-79, which acts as the Nucleophile. Residues Arg-105 and 134–135 each bind L-glutamine; that span reads IR. Catalysis depends on charge relay system residues His-170 and Glu-172.

This sequence belongs to the glutaminase PdxT/SNO family. In the presence of PdxS, forms a dodecamer of heterodimers. Only shows activity in the heterodimer.

It catalyses the reaction aldehydo-D-ribose 5-phosphate + D-glyceraldehyde 3-phosphate + L-glutamine = pyridoxal 5'-phosphate + L-glutamate + phosphate + 3 H2O + H(+). The enzyme catalyses L-glutamine + H2O = L-glutamate + NH4(+). It functions in the pathway cofactor biosynthesis; pyridoxal 5'-phosphate biosynthesis. In terms of biological role, catalyzes the hydrolysis of glutamine to glutamate and ammonia as part of the biosynthesis of pyridoxal 5'-phosphate. The resulting ammonia molecule is channeled to the active site of PdxS. In Listeria welshimeri serovar 6b (strain ATCC 35897 / DSM 20650 / CCUG 15529 / CIP 8149 / NCTC 11857 / SLCC 5334 / V8), this protein is Pyridoxal 5'-phosphate synthase subunit PdxT.